The primary structure comprises 517 residues: zeta-carotene-forming phytoene desaturase (517 aa).

11–44 (VVVGAGVGGLAAAARLAHQGFDVQVFEKTQGPGG) provides a ligand contact to FAD.

It belongs to the carotenoid/retinoid oxidoreductase family. Requires FAD as cofactor.

It catalyses the reaction 15-cis-phytoene + 2 A = all-trans-zeta-carotene + 2 AH2. It functions in the pathway carotenoid biosynthesis; lycopene biosynthesis. Dehydrogenates carotenes in the cis conformation: has cis-to-trans isomerase activity and mediates dehydrogenation of cis-phytoene, producing zeta-carotene via the intermediary of phytofluene by the symmetrical introduction of 2 double bonds at the C-11 and C-11' positions of phytoene. This is zeta-carotene-forming phytoene desaturase (carA2) from Myxococcus xanthus.